The sequence spans 84 residues: Putative pelota-like protein YCL001W-B (84 aa).

Belongs to the eukaryotic release factor 1 family. Pelota subfamily. Highly divergent.

The polypeptide is Putative pelota-like protein YCL001W-B (Saccharomyces cerevisiae (strain ATCC 204508 / S288c) (Baker's yeast)).